The following is a 140-amino-acid chain: Nucleoside diphosphate kinase (140 aa).

Residues Lys11, Phe59, Arg87, Thr93, Arg104, and Asn114 each contribute to the ATP site. His117 functions as the Pros-phosphohistidine intermediate in the catalytic mechanism.

Belongs to the NDK family. As to quaternary structure, homotetramer. Mg(2+) serves as cofactor.

It localises to the cytoplasm. The enzyme catalyses a 2'-deoxyribonucleoside 5'-diphosphate + ATP = a 2'-deoxyribonucleoside 5'-triphosphate + ADP. It catalyses the reaction a ribonucleoside 5'-diphosphate + ATP = a ribonucleoside 5'-triphosphate + ADP. In terms of biological role, major role in the synthesis of nucleoside triphosphates other than ATP. The ATP gamma phosphate is transferred to the NDP beta phosphate via a ping-pong mechanism, using a phosphorylated active-site intermediate. The chain is Nucleoside diphosphate kinase from Rickettsia prowazekii (strain Madrid E).